A 457-amino-acid chain; its full sequence is Probable xyloglucan 6-xylosyltransferase 3 (457 aa).

Residues 1–40 (MGKEDGFRTQKRVSTASSAAAGVLPTTMASGGVRRPPPRG) are disordered. Residues 1 to 51 (MGKEDGFRTQKRVSTASSAAAGVLPTTMASGGVRRPPPRGRQIQKTFNNVK) lie on the Cytoplasmic side of the membrane. A helical; Signal-anchor for type II membrane protein transmembrane segment spans residues 52 to 71 (MTILCGFVTILVLRGTIGIN). Residues 72–457 (FGTSDADVVN…TTPLKIEARS (386 aa)) lie on the Lumenal side of the membrane. Residues Asn115 and Asn431 are each glycosylated (N-linked (GlcNAc...) asparagine).

It belongs to the glycosyltransferase 34 family.

The protein resides in the golgi apparatus membrane. It carries out the reaction Transfers an alpha-D-xylosyl residue from UDP-D-xylose to a glucose residue in xyloglucan, forming an alpha-(1-&gt;6)-D-xylosyl-D-glucose linkage.. Probable xyloglucan xylosyltransferase involved in the biosynthesis of xyloglucan. This is Probable xyloglucan 6-xylosyltransferase 3 from Arabidopsis thaliana (Mouse-ear cress).